The sequence spans 438 residues: Transposon Ty2-LR1 Gag polyprotein (438 aa).

3 stretches are compositionally biased toward polar residues: residues 1–11 (MESQQLHQNPH), 19–39 (ASVTSKEVPSNQDPLAVSASN), and 49–60 (KVNSQQETTPGT). Disordered stretches follow at residues 1-86 (MESQ…GQYQ), 364-397 (KNVSRTSPNTTNTKVTTRNYHRTNSSKPRAAKAH), and 419-438 (SSQYLSDDNELSLRPATERI). The interval 295–397 (ENNINVSDRL…SSKPRAAKAH (103 aa)) is RNA-binding. A compositionally biased stretch (low complexity) spans 369–381 (TSPNTTNTKVTTR).

In terms of assembly, homotrimer.

It localises to the cytoplasm. Its function is as follows. Capsid protein (CA) is the structural component of the virus-like particle (VLP), forming the shell that encapsulates the retrotransposons dimeric RNA genome. The particles are assembled from trimer-clustered units and there are holes in the capsid shells that allow for the diffusion of macromolecules. CA also has nucleocapsid-like chaperone activity, promoting primer tRNA(i)-Met annealing to the multipartite primer-binding site (PBS), dimerization of Ty2 RNA and initiation of reverse transcription. The protein is Transposon Ty2-LR1 Gag polyprotein (TY2A-LR1) of Saccharomyces cerevisiae (strain ATCC 204508 / S288c) (Baker's yeast).